An 843-amino-acid polypeptide reads, in one-letter code: Aminopeptidase N (843 aa).

Substrate-binding positions include Glu120 and 252 to 256 (GAMEN). A Zn(2+)-binding site is contributed by His288. Catalysis depends on Glu289, which acts as the Proton acceptor. 2 residues coordinate Zn(2+): His292 and Glu311.

This sequence belongs to the peptidase M1 family. As to quaternary structure, monomer. It depends on Zn(2+) as a cofactor.

The protein localises to the cytoplasm. The catalysed reaction is Release of an N-terminal amino acid, Xaa-|-Yaa- from a peptide, amide or arylamide. Xaa is preferably Ala, but may be most amino acids including Pro (slow action). When a terminal hydrophobic residue is followed by a prolyl residue, the two may be released as an intact Xaa-Pro dipeptide.. Functionally, aminopeptidase with broad substrate specificity to several peptides. This Lactobacillus delbrueckii subsp. lactis protein is Aminopeptidase N (pepN).